A 137-amino-acid chain; its full sequence is Methylglyoxal synthase (137 aa).

An MGS-like domain is found at 1-137; the sequence is MNIALVAHDK…KLSHNDEPPA (137 aa). Substrate is bound by residues H8, K12, 34–37, and 54–55; these read TGTT and SG. The active-site Proton donor/acceptor is D60. Residue H87 participates in substrate binding.

The protein belongs to the methylglyoxal synthase family.

It carries out the reaction dihydroxyacetone phosphate = methylglyoxal + phosphate. Functionally, catalyzes the formation of methylglyoxal from dihydroxyacetone phosphate. This Exiguobacterium sp. (strain ATCC BAA-1283 / AT1b) protein is Methylglyoxal synthase.